The primary structure comprises 936 residues: Probable outer membrane protein pmp7 (936 aa).

The signal sequence occupies residues 1–23 (MKSSVSWLFFSSIPLFSSLSIVA). Residues 636 to 936 (GEPFERELWL…NTNLGSKFCF (301 aa)) form the Autotransporter domain.

Belongs to the PMP outer membrane protein family.

Its subcellular location is the secreted. The protein localises to the cell wall. It is found in the cell outer membrane. This is Probable outer membrane protein pmp7 (pmp7) from Chlamydia pneumoniae (Chlamydophila pneumoniae).